A 211-amino-acid polypeptide reads, in one-letter code: LexA repressor (211 aa).

A DNA-binding region (H-T-H motif) is located at residues 27–47 (QTEIARAFGFKGVRAAQYHLE). Residues serine 131 and lysine 168 each act as for autocatalytic cleavage activity in the active site.

It belongs to the peptidase S24 family. In terms of assembly, homodimer.

The enzyme catalyses Hydrolysis of Ala-|-Gly bond in repressor LexA.. Its function is as follows. Represses a number of genes involved in the response to DNA damage (SOS response), including recA and lexA. In the presence of single-stranded DNA, RecA interacts with LexA causing an autocatalytic cleavage which disrupts the DNA-binding part of LexA, leading to derepression of the SOS regulon and eventually DNA repair. The polypeptide is LexA repressor (Stenotrophomonas maltophilia (strain R551-3)).